Reading from the N-terminus, the 98-residue chain is Acylphosphatase (98 aa).

The 87-residue stretch at 12–98 (TYYVRVRGVV…ERRFERFQQQ (87 aa)) folds into the Acylphosphatase-like domain. Residues Arg-27 and Asn-45 contribute to the active site.

Belongs to the acylphosphatase family.

The enzyme catalyses an acyl phosphate + H2O = a carboxylate + phosphate + H(+). The polypeptide is Acylphosphatase (acyP) (Burkholderia vietnamiensis (strain G4 / LMG 22486) (Burkholderia cepacia (strain R1808))).